The primary structure comprises 640 residues: Chaperone protein DnaK (640 aa).

Thr198 is modified (phosphothreonine; by autocatalysis). Positions 600 to 640 are disordered; that stretch reads KTQGAGAEGSEQPHGEQEAGGAAKGETVVDADFEEVKDDKK. Over residues 628 to 640 the composition is skewed to acidic residues; it reads VDADFEEVKDDKK.

Belongs to the heat shock protein 70 family.

Its function is as follows. Acts as a chaperone. This chain is Chaperone protein DnaK, found in Geobacter sp. (strain M21).